The following is a 556-amino-acid chain: DNA ligase B (556 aa).

Lys-122 (N6-AMP-lysine intermediate) is an active-site residue.

Belongs to the NAD-dependent DNA ligase family. LigB subfamily.

The catalysed reaction is NAD(+) + (deoxyribonucleotide)n-3'-hydroxyl + 5'-phospho-(deoxyribonucleotide)m = (deoxyribonucleotide)n+m + AMP + beta-nicotinamide D-nucleotide.. Its function is as follows. Catalyzes the formation of phosphodiester linkages between 5'-phosphoryl and 3'-hydroxyl groups in double-stranded DNA using NAD as a coenzyme and as the energy source for the reaction. This chain is DNA ligase B, found in Enterobacter sp. (strain 638).